The chain runs to 238 residues: Demethylmenaquinone methyltransferase (238 aa).

S-adenosyl-L-methionine contacts are provided by residues Thr65, Asp85, and 109 to 110; that span reads DA.

This sequence belongs to the class I-like SAM-binding methyltransferase superfamily. MenG/UbiE family.

The catalysed reaction is a 2-demethylmenaquinol + S-adenosyl-L-methionine = a menaquinol + S-adenosyl-L-homocysteine + H(+). It participates in quinol/quinone metabolism; menaquinone biosynthesis; menaquinol from 1,4-dihydroxy-2-naphthoate: step 2/2. Methyltransferase required for the conversion of demethylmenaquinol (DMKH2) to menaquinol (MKH2). This chain is Demethylmenaquinone methyltransferase, found in Roseiflexus sp. (strain RS-1).